We begin with the raw amino-acid sequence, 402 residues long: Phosphoglycerate kinase (402 aa).

Substrate is bound by residues 24-26, arginine 40, 63-66, arginine 122, and arginine 155; these read DFN and HFGR. ATP-binding positions include lysine 206, glycine 297, glutamate 328, and 357–360; that span reads GGDS.

Belongs to the phosphoglycerate kinase family. In terms of assembly, monomer.

Its subcellular location is the cytoplasm. It carries out the reaction (2R)-3-phosphoglycerate + ATP = (2R)-3-phospho-glyceroyl phosphate + ADP. It participates in carbohydrate degradation; glycolysis; pyruvate from D-glyceraldehyde 3-phosphate: step 2/5. This Prochlorococcus marinus (strain SARG / CCMP1375 / SS120) protein is Phosphoglycerate kinase.